The following is an 812-amino-acid chain: Fibroblast growth factor receptor 1 (812 aa).

The N-terminal stretch at 1–20 is a signal peptide; that stretch reads MFSGMSLLLWGVLLGAALSV. At 21–371 the chain is on the extracellular side; that stretch reads ARPPSTLPDE…PALLASPLQL (351 aa). Residues 25–118 form the Ig-like C2-type 1 domain; the sequence is STLPDEVAPK…YTVLCSVNVS (94 aa). Cys54 and Cys100 are oxidised to a cystine. Asn76, Asn116, Asn133, Asn223, Asn236, Asn260, Asn292, Asn313, and Asn326 each carry an N-linked (GlcNAc...) asparagine glycan. Residues 121–153 are disordered; it reads LPSAEDDDEDDDNSSSEEKAAENSKPNRPLWSH. A compositionally biased stretch (acidic residues) spans 124–135; sequence AEDDDEDDDNSS. Ig-like C2-type domains follow at residues 154-242 and 251-353; these read PEKM…YQLD and PILQ…AWLT. A disulfide bridge connects residues Cys174 and Cys226. A disulfide bridge links Cys273 with Cys337. Residues 372–393 form a helical membrane-spanning segment; the sequence is EIIIYCTGAAFVSAMVVTIIIF. The Cytoplasmic portion of the chain corresponds to 394–812; it reads KMKHPSKKSD…KYSNGGLKKR (419 aa). A Phosphotyrosine; by autocatalysis modification is found at Tyr457. Residues 472 to 761 form the Protein kinase domain; it reads LILGKPLGEG…LALSSNQEYL (290 aa). ATP is bound by residues 478–484, Lys508, 556–558, and Asn562; these read LGEGCFG and EYT. A phosphotyrosine; by autocatalysis mark is found at Tyr577 and Tyr579. Residue Asp617 is the Proton acceptor of the active site. The ATP site is built by Arg621 and Asp635. A phosphotyrosine; by autocatalysis mark is found at Tyr647, Tyr648, Tyr724, and Tyr760. The tract at residues 784–812 is disordered; the sequence is SGEDSMFSHDPLPDEPCLPKYSNGGLKKR.

The protein belongs to the protein kinase superfamily. Tyr protein kinase family. Fibroblast growth factor receptor subfamily. As to quaternary structure, monomer. Homodimer after ligand binding. Interacts with il17rd. In terms of processing, autophosphorylated. Binding of FGF family members together with heparan sulfate proteoglycan or heparin promotes receptor dimerization and autophosphorylation on tyrosine residues. Autophosphorylation occurs in trans between the two FGFR molecules present in the dimer and proceeds in a highly ordered manner. Phosphotyrosine residues provide docking sites for interacting proteins and so are crucial for FGFR1 function and its regulation. Ubiquitinated. FGFR1 is rapidly ubiquitinated after autophosphorylation, leading to internalization and degradation. Post-translationally, N-glycosylated in the endoplasmic reticulum. The N-glycan chains undergo further maturation to an Endo H-resistant form in the Golgi apparatus.

The protein resides in the cell membrane. It is found in the nucleus. Its subcellular location is the cytoplasm. The protein localises to the cytosol. It localises to the cytoplasmic vesicle. The enzyme catalyses L-tyrosyl-[protein] + ATP = O-phospho-L-tyrosyl-[protein] + ADP + H(+). Its activity is regulated as follows. Present in an inactive conformation in the absence of bound ligand. Ligand binding leads to dimerization and activation by sequential autophosphorylation on tyrosine residues. In terms of biological role, tyrosine-protein kinase that acts as a cell-surface receptor for fibroblast growth factors and plays an essential role in the regulation of embryonic development, cell proliferation, differentiation and migration. Required for normal mesoderm patterning and normal skeletogenesis. Phosphorylates PLCG1, FRS2, GAB1 and SHB. Ligand binding leads to the activation of several signaling cascades. Activation of PLCG1 leads to the production of the cellular signaling molecules diacylglycerol and inositol-1,4,5-trisphosphate. Phosphorylation of FRS2 triggers recruitment of GRB2, GAB1, PIK3R1 and SOS1, and mediates activation of RAS, MAPK1/ERK2, MAPK3/ERK1 and the MAP kinase signaling pathway, as well as of the AKT1 signaling pathway. Promotes phosphorylation of SHC1, STAT1 and PTPN11/SHP2. In the nucleus, enhances RPS6KA1 and CREB1 activity and contributes to the regulation of transcription. FGFR1 signaling is down-regulated by ubiquitination, internalization and degradation. This chain is Fibroblast growth factor receptor 1 (fgfr1), found in Xenopus laevis (African clawed frog).